We begin with the raw amino-acid sequence, 549 residues long: Cation/acetate symporter ActP (549 aa).

13 helical membrane-spanning segments follow: residues 33-53, 77-97, 103-123, 148-168, 183-203, 206-226, 262-282, 303-323, 355-375, 404-424, 428-448, 464-484, and 493-513; these read WQAIIMFLIFVVFTLGITYWA, LAIAGDYMSAASFLGISALVF, GLIYSLGFLVGWPIILFLIAE, ILSACGSLVVVALYLIAQMVG, IAVVLVGVLMMMYVLFGGMLA, WVQIIKAVLLLFGASFMAFMV, ISALSLGLGLMFGTAGLPHIL, GFMGYFYILTFIIGFGAIMLV, LFLGFISAVAFATILAVVAGL, VSKITVLILGVIAIILGVLFE, IAFMVGLAFAIAASCNFPIIL, GGWLGLITAVVLMILGPTIWV, and IFPYEYPALFSITVAFLGIWF.

This sequence belongs to the sodium:solute symporter (SSF) (TC 2.A.21) family.

It is found in the cell inner membrane. Functionally, transports acetate. In Escherichia fergusonii (strain ATCC 35469 / DSM 13698 / CCUG 18766 / IAM 14443 / JCM 21226 / LMG 7866 / NBRC 102419 / NCTC 12128 / CDC 0568-73), this protein is Cation/acetate symporter ActP.